Reading from the N-terminus, the 430-residue chain is Bifunctional protein GlmU (430 aa).

The tract at residues 1 to 227 (MISKTHTFVI…GEEATGINNR (227 aa)) is pyrophosphorylase. UDP-N-acetyl-alpha-D-glucosamine contacts are provided by residues lysine 25, glutamine 74, 79-80 (GT), 104-106 (YGD), glycine 140, glutamate 154, asparagine 168, and asparagine 225. Aspartate 106 provides a ligand contact to Mg(2+). Asparagine 225 is a Mg(2+) binding site. Residues 228–248 (NDLIKAEFYFQENKRKIFTDS) form a linker region. The N-acetyltransferase stretch occupies residues 249-430 (GVTLVAPETV…REKQVTKRIK (182 aa)). Arginine 314 and lysine 332 together coordinate UDP-N-acetyl-alpha-D-glucosamine. The active-site Proton acceptor is the histidine 344. The UDP-N-acetyl-alpha-D-glucosamine site is built by tyrosine 347 and asparagine 358. Acetyl-CoA-binding positions include alanine 361, 367-368 (NY), alanine 404, and arginine 421.

It in the N-terminal section; belongs to the N-acetylglucosamine-1-phosphate uridyltransferase family. In the C-terminal section; belongs to the transferase hexapeptide repeat family. In terms of assembly, homotrimer. The cofactor is Mg(2+).

The protein localises to the cytoplasm. The enzyme catalyses alpha-D-glucosamine 1-phosphate + acetyl-CoA = N-acetyl-alpha-D-glucosamine 1-phosphate + CoA + H(+). It carries out the reaction N-acetyl-alpha-D-glucosamine 1-phosphate + UTP + H(+) = UDP-N-acetyl-alpha-D-glucosamine + diphosphate. Its pathway is nucleotide-sugar biosynthesis; UDP-N-acetyl-alpha-D-glucosamine biosynthesis; N-acetyl-alpha-D-glucosamine 1-phosphate from alpha-D-glucosamine 6-phosphate (route II): step 2/2. It functions in the pathway nucleotide-sugar biosynthesis; UDP-N-acetyl-alpha-D-glucosamine biosynthesis; UDP-N-acetyl-alpha-D-glucosamine from N-acetyl-alpha-D-glucosamine 1-phosphate: step 1/1. The protein operates within bacterial outer membrane biogenesis; LPS lipid A biosynthesis. Functionally, catalyzes the last two sequential reactions in the de novo biosynthetic pathway for UDP-N-acetylglucosamine (UDP-GlcNAc). The C-terminal domain catalyzes the transfer of acetyl group from acetyl coenzyme A to glucosamine-1-phosphate (GlcN-1-P) to produce N-acetylglucosamine-1-phosphate (GlcNAc-1-P), which is converted into UDP-GlcNAc by the transfer of uridine 5-monophosphate (from uridine 5-triphosphate), a reaction catalyzed by the N-terminal domain. The polypeptide is Bifunctional protein GlmU (Wolbachia pipientis wMel).